A 315-amino-acid polypeptide reads, in one-letter code: Glycine--tRNA ligase alpha subunit (315 aa).

This sequence belongs to the class-II aminoacyl-tRNA synthetase family. Tetramer of two alpha and two beta subunits.

It is found in the cytoplasm. The enzyme catalyses tRNA(Gly) + glycine + ATP = glycyl-tRNA(Gly) + AMP + diphosphate. The chain is Glycine--tRNA ligase alpha subunit from Pseudomonas syringae pv. tomato (strain ATCC BAA-871 / DC3000).